The sequence spans 269 residues: Hydroxyethylthiazole kinase (269 aa).

Position 41 (Met41) interacts with substrate. Positions 117 and 163 each coordinate ATP. Residue Gly190 coordinates substrate.

Belongs to the Thz kinase family. It depends on Mg(2+) as a cofactor.

The catalysed reaction is 5-(2-hydroxyethyl)-4-methylthiazole + ATP = 4-methyl-5-(2-phosphooxyethyl)-thiazole + ADP + H(+). It functions in the pathway cofactor biosynthesis; thiamine diphosphate biosynthesis; 4-methyl-5-(2-phosphoethyl)-thiazole from 5-(2-hydroxyethyl)-4-methylthiazole: step 1/1. Its function is as follows. Catalyzes the phosphorylation of the hydroxyl group of 4-methyl-5-beta-hydroxyethylthiazole (THZ). The chain is Hydroxyethylthiazole kinase from Latilactobacillus sakei subsp. sakei (strain 23K) (Lactobacillus sakei subsp. sakei).